A 538-amino-acid polypeptide reads, in one-letter code: Bifunctional purine biosynthesis protein PurH (538 aa).

An MGS-like domain is found at 8–158 (IPAPDKVEIK…KNHAYVTTLT (151 aa)).

It belongs to the PurH family.

It catalyses the reaction (6R)-10-formyltetrahydrofolate + 5-amino-1-(5-phospho-beta-D-ribosyl)imidazole-4-carboxamide = 5-formamido-1-(5-phospho-D-ribosyl)imidazole-4-carboxamide + (6S)-5,6,7,8-tetrahydrofolate. It carries out the reaction IMP + H2O = 5-formamido-1-(5-phospho-D-ribosyl)imidazole-4-carboxamide. Its pathway is purine metabolism; IMP biosynthesis via de novo pathway; 5-formamido-1-(5-phospho-D-ribosyl)imidazole-4-carboxamide from 5-amino-1-(5-phospho-D-ribosyl)imidazole-4-carboxamide (10-formyl THF route): step 1/1. It functions in the pathway purine metabolism; IMP biosynthesis via de novo pathway; IMP from 5-formamido-1-(5-phospho-D-ribosyl)imidazole-4-carboxamide: step 1/1. The polypeptide is Bifunctional purine biosynthesis protein PurH (Rhizobium johnstonii (strain DSM 114642 / LMG 32736 / 3841) (Rhizobium leguminosarum bv. viciae)).